The chain runs to 155 residues: uncharacterized protein (155 aa).

The first 23 residues, Met1–Ala23, serve as a signal peptide directing secretion. An intrachain disulfide couples Cys86 to Cys91.

It belongs to the ivy family.

The protein resides in the periplasm. This is an uncharacterized protein from Pseudomonas aeruginosa (strain ATCC 15692 / DSM 22644 / CIP 104116 / JCM 14847 / LMG 12228 / 1C / PRS 101 / PAO1).